We begin with the raw amino-acid sequence, 122 residues long: Large ribosomal subunit protein uL14 (122 aa).

The protein belongs to the universal ribosomal protein uL14 family. In terms of assembly, part of the 50S ribosomal subunit. Forms a cluster with proteins L3 and L19. In the 70S ribosome, L14 and L19 interact and together make contacts with the 16S rRNA in bridges B5 and B8.

Functionally, binds to 23S rRNA. Forms part of two intersubunit bridges in the 70S ribosome. The polypeptide is Large ribosomal subunit protein uL14 (Acaryochloris marina (strain MBIC 11017)).